The primary structure comprises 54 residues: Rubredoxin-1 (54 aa).

A Rubredoxin-like domain is found at 1-52 (MKKWECVVCGFIYDEAEGLPDEGIEPGTAWNNVPEDWVCPDCGVGKDDFEMV). 4 residues coordinate Fe cation: Cys-6, Cys-9, Cys-39, and Cys-42.

The protein belongs to the rubredoxin family. Fe(3+) is required as a cofactor.

It is found in the cytoplasm. It participates in hydrocarbon metabolism; alkane degradation. In terms of biological role, involved in the hydrocarbon hydroxylating system, which transfers electrons from NADH to rubredoxin reductase and then through rubredoxin to alkane 1 monooxygenase. The chain is Rubredoxin-1 (rubA) from Alcanivorax borkumensis (strain ATCC 700651 / DSM 11573 / NCIMB 13689 / SK2).